The following is a 130-amino-acid chain: Small ribosomal subunit protein uS9 (130 aa).

The protein belongs to the universal ribosomal protein uS9 family.

This is Small ribosomal subunit protein uS9 from Bacillus cytotoxicus (strain DSM 22905 / CIP 110041 / 391-98 / NVH 391-98).